A 33-amino-acid polypeptide reads, in one-letter code: Mu-theraphotoxin-Tp1a (33 aa).

Disulfide bonds link Cys2/Cys17, Cys9/Cys22, and Cys16/Cys29. Isoleucine amide is present on Ile33.

Belongs to the neurotoxin 10 (Hwtx-1) family. 55 (ProTx-III) subfamily. As to expression, expressed by the venom gland.

The protein resides in the secreted. In terms of biological role, inhibits voltage-gated sodium channels without significantly altering the voltage dependence of activation or inactivation. Preferentially inhibits human Nav1.7/SCN9A (IC(50)=2.1 nM) &gt; human Nav1.6/SCN8A &gt; human Nav1.2/SCN2A &gt; human Nav1.1/SCN1A &gt; human Nav1.3/SCN3A channels. Exhibits analgesic properties by reversing spontaneous pain induced in mice by intraplantar injection with OD1 (AC P84646), a scorpion toxin that potentiates human Nav1.7/SCN9A. This is Mu-theraphotoxin-Tp1a from Thrixopelma pruriens (Peruvian green velvet tarantula).